Reading from the N-terminus, the 627-residue chain is 1-deoxy-D-xylulose-5-phosphate synthase (627 aa).

Thiamine diphosphate contacts are provided by residues histidine 80 and 121-123; that span reads GHS. Aspartate 152 contributes to the Mg(2+) binding site. Residues 153–154, asparagine 181, tyrosine 288, and glutamate 370 each bind thiamine diphosphate; that span reads GA. A Mg(2+)-binding site is contributed by asparagine 181.

It belongs to the transketolase family. DXPS subfamily. As to quaternary structure, homodimer. It depends on Mg(2+) as a cofactor. Requires thiamine diphosphate as cofactor.

The enzyme catalyses D-glyceraldehyde 3-phosphate + pyruvate + H(+) = 1-deoxy-D-xylulose 5-phosphate + CO2. Its pathway is metabolic intermediate biosynthesis; 1-deoxy-D-xylulose 5-phosphate biosynthesis; 1-deoxy-D-xylulose 5-phosphate from D-glyceraldehyde 3-phosphate and pyruvate: step 1/1. Its function is as follows. Catalyzes the acyloin condensation reaction between C atoms 2 and 3 of pyruvate and glyceraldehyde 3-phosphate to yield 1-deoxy-D-xylulose-5-phosphate (DXP). This is 1-deoxy-D-xylulose-5-phosphate synthase from Vibrio atlanticus (strain LGP32) (Vibrio splendidus (strain Mel32)).